The chain runs to 148 residues: Putative cyclin-dependent kinase inhibitor SPL2 (148 aa).

Residues serine 59 and serine 86 each carry the phosphoserine modification.

Its subcellular location is the cytoplasmic granule. The protein resides in the cytoplasm. In terms of biological role, putative cyclin-dependent kinase (CDK) inhibitor necessary and sufficient for PHO pathway-dependent down-regulation of low-affinity phosphate transport. This is Putative cyclin-dependent kinase inhibitor SPL2 (SPL2) from Saccharomyces cerevisiae (strain ATCC 204508 / S288c) (Baker's yeast).